A 380-amino-acid chain; its full sequence is NF-kappa-B inhibitor-like protein 1 (380 aa).

A disordered region spans residues 1 to 34 (MSNPSPQVPEEEASTSVCRPKSSMASTSRRQRRE). 2 ANK repeats span residues 64–93 (GQPPPLHRACARHDAPALCLLLRLGADPAH) and 97–133 (HGDTALHAAARQGPDAYTDFFLPLLSRCPSAMGIKNK). Disordered regions lie at residues 131–166 (KNKDGETPGQILGWGPPWDSAEEEEDDASKEREWRQ) and 185–293 (GDAS…RGSL). At S150 the chain carries Phosphoserine. A compositionally biased stretch (basic and acidic residues) spans 237-286 (QQEEEQRLFRERARAKEEELRESRARRAQEALGDREPKPTRAGPREEHPR).

As to quaternary structure, interacts with CACTIN (via N-terminal domain); the interaction occurs in a pro-inflammatory-independent manner.

It localises to the nucleus. Its function is as follows. Involved in the regulation of innate immune response. Acts as negative regulator of Toll-like receptor and interferon-regulatory factor (IRF) signaling pathways. Contributes to the negative regulation of transcriptional activation of NF-kappa-B target genes in response to endogenous pro-inflammatory stimuli. The polypeptide is NF-kappa-B inhibitor-like protein 1 (NFKBIL1) (Pan troglodytes (Chimpanzee)).